The following is a 372-amino-acid chain: Serine/threonine-protein kinase 17B (372 aa).

The 261-residue stretch at 33 to 293 (TLTPKELGRG…AESCLSHSWL (261 aa)) folds into the Protein kinase domain. ATP is bound by residues 39 to 47 (LGRGKFAVV) and Lys-62. The Proton acceptor role is filled by Asp-158. Residues 305–348 (EETSGSSQIQDLTLRSSEEKTSKSSCNGSCGAREDKENIPEDGS) are disordered. Residues 307–319 (TSGSSQIQDLTLR) show a composition bias toward polar residues.

The protein belongs to the protein kinase superfamily. CAMK Ser/Thr protein kinase family. DAP kinase subfamily. Interacts with CHP1; the interaction induces CHP1 to translocate from the Golgi to the nucleus. In terms of processing, autophosphorylated.

The protein localises to the nucleus. It is found in the cell membrane. The protein resides in the endoplasmic reticulum-Golgi intermediate compartment. It carries out the reaction L-seryl-[protein] + ATP = O-phospho-L-seryl-[protein] + ADP + H(+). It catalyses the reaction L-threonyl-[protein] + ATP = O-phospho-L-threonyl-[protein] + ADP + H(+). Its function is as follows. Acts as a positive regulator of apoptosis. Phosphorylates myosin light chains. The sequence is that of Serine/threonine-protein kinase 17B (Stk17b) from Mus musculus (Mouse).